Reading from the N-terminus, the 590-residue chain is Glutamine--fructose-6-phosphate aminotransferase [isomerizing] (590 aa).

The Nucleophile; for GATase activity role is filled by Cys-2. The region spanning 2–221 (CGIIGIVSSK…DGELGFITTS (220 aa)) is the Glutamine amidotransferase type-2 domain. SIS domains are found at residues 286 to 422 (IIAE…DNTN) and 445 to 580 (IGEE…PDKP). Residue Lys-585 is the For Fru-6P isomerization activity of the active site.

Homodimer.

The protein localises to the cytoplasm. The catalysed reaction is D-fructose 6-phosphate + L-glutamine = D-glucosamine 6-phosphate + L-glutamate. Catalyzes the first step in hexosamine metabolism, converting fructose-6P into glucosamine-6P using glutamine as a nitrogen source. This Sulfolobus acidocaldarius (strain ATCC 33909 / DSM 639 / JCM 8929 / NBRC 15157 / NCIMB 11770) protein is Glutamine--fructose-6-phosphate aminotransferase [isomerizing].